Reading from the N-terminus, the 346-residue chain is Sensor histidine kinase GraS (346 aa).

The next 2 helical transmembrane spans lie at 15–35 (MNWI…SLID) and 43–63 (LFYI…LTYF). A Histidine kinase domain is found at 126–332 (EFVHDIKTPV…TVRLIFPLQN (207 aa)).

As to quaternary structure, interacts with GraX.

The protein localises to the cell membrane. It catalyses the reaction ATP + protein L-histidine = ADP + protein N-phospho-L-histidine.. Its function is as follows. Member of the two-component regulatory system GraR/GraS involved in resistance against cationic antimicrobial peptides (CAMPs). Functions as a sensor protein kinase which phosphorylates GraR through the auxiliary protein GraX. In turn, GraR up-regulates many genes such as adhesins, exoproteins, transporters, toxins, and proteins involved in cell wall synthesis. Down-regulates the expression of many genes involved in RNA and amino acid synthesis or glycolysis. In Staphylococcus aureus (strain COL), this protein is Sensor histidine kinase GraS (graS).